The sequence spans 177 residues: Translation initiation factor IF-3 (177 aa).

The protein belongs to the IF-3 family. In terms of assembly, monomer.

The protein localises to the cytoplasm. In terms of biological role, IF-3 binds to the 30S ribosomal subunit and shifts the equilibrium between 70S ribosomes and their 50S and 30S subunits in favor of the free subunits, thus enhancing the availability of 30S subunits on which protein synthesis initiation begins. The protein is Translation initiation factor IF-3 of Nitratiruptor sp. (strain SB155-2).